Reading from the N-terminus, the 682-residue chain is MSRKQLALFEPTLVVQALKEAVKKLNPQAQWRNPVMFIVWIGSLLTTCISIAMASGAMPGNALFSAAISGWLWVTVLFANFAEALAEGRSKAQANSLKGVKKTAFARKLREPKYGAAADKVPADQLRKGDIVLVEAGDIIPCDGEVIEGGASVDESAITGESAPVIRESGGDFASVTGGTRILSDWLVIECSVNPGETFLDRMIAMVEGAQRRKTPNEIALTILLIALTIVFLLATATLWPFSAWGGNAVSVTVLVALLVCLIPTTIGGLLSAIGVAGMSRMLGANVIATSGRAVEAAGDVDVLLLDKTGTITLGNRQASEFIPAQGVDEKTLADAAQLASLADETPEGRSIVILAKQRFNLRERDVQSLHATFVPFTAQSRMSGINIDNRMIRKGSVDAIRRHVEANGGHFPTDVDQKVDQVARQGATPLVVVEGSRVLGVIALKDIVKGGIKERFAQLRKMGIKTVMITGDNRLTAAAIAAEAGVDDFLAEATPEAKLALIRQYQAEGRLVAMTGDGTNDAPALAQADVAVAMNSGTQAAKEAGNMVDLDSNPTKLIEVVHIGKQMLMTRGSLTTFSIANDVAKYFAIIPAAFAATYPQLNALNIMRLHSPDSAILSAVIFNALIIVFLIPLALKGVSYKPLTASAMLRRNLWIYGLGGLLVPFIGIKVIDLLLTVCGLV.

4 consecutive transmembrane segments (helical) span residues 34–54 (PVMF…IAMA), 62–82 (ALFS…ANFA), 219–239 (IALT…TATL), and 254–274 (VLVA…LSAI). The 4-aspartylphosphate intermediate role is filled by D307. ATP is bound by residues D344, E348, 377–384 (FTAQSRMS), and K395. Positions 518 and 522 each coordinate Mg(2+). The next 3 membrane-spanning stretches (helical) occupy residues 588 to 608 (FAII…LNIM), 616 to 636 (AILS…PLAL), and 656 to 676 (IYGL…DLLL).

Belongs to the cation transport ATPase (P-type) (TC 3.A.3) family. Type IA subfamily. In terms of assembly, the system is composed of three essential subunits: KdpA, KdpB and KdpC.

The protein localises to the cell inner membrane. The enzyme catalyses K(+)(out) + ATP + H2O = K(+)(in) + ADP + phosphate + H(+). In terms of biological role, part of the high-affinity ATP-driven potassium transport (or Kdp) system, which catalyzes the hydrolysis of ATP coupled with the electrogenic transport of potassium into the cytoplasm. This subunit is responsible for energy coupling to the transport system and for the release of the potassium ions to the cytoplasm. In Escherichia coli O139:H28 (strain E24377A / ETEC), this protein is Potassium-transporting ATPase ATP-binding subunit.